The primary structure comprises 228 residues: Urease accessory protein UreF (228 aa).

The protein belongs to the UreF family. UreD, UreF and UreG form a complex that acts as a GTP-hydrolysis-dependent molecular chaperone, activating the urease apoprotein by helping to assemble the nickel containing metallocenter of UreC. The UreE protein probably delivers the nickel.

The protein resides in the cytoplasm. Its function is as follows. Required for maturation of urease via the functional incorporation of the urease nickel metallocenter. The protein is Urease accessory protein UreF of Prochlorococcus marinus (strain AS9601).